A 411-amino-acid chain; its full sequence is CinA-like protein (411 aa).

This sequence belongs to the CinA family.

In Dictyoglomus turgidum (strain DSM 6724 / Z-1310), this protein is CinA-like protein.